Reading from the N-terminus, the 321-residue chain is Altered inheritance of mitochondria protein 18, mitochondrial (321 aa).

Residues 1–72 (MDRGRCANML…LLATSLYYRD (72 aa)) constitute a mitochondrion transit peptide.

It belongs to the AIM18/AIM46 family.

Its subcellular location is the mitochondrion. The protein is Altered inheritance of mitochondria protein 18, mitochondrial (AIM18) of Saccharomyces cerevisiae (strain AWRI1631) (Baker's yeast).